A 652-amino-acid chain; its full sequence is UvrABC system protein C (652 aa).

One can recognise a GIY-YIG domain in the interval 19-96; sequence KTSGVYLWKD…IKKHKPRYNI (78 aa). The UVR domain maps to 203–238; sequence EDVSGTLKEKMKEAAEKKEFEKAARLRDGIQAVYAL.

This sequence belongs to the UvrC family. Interacts with UvrB in an incision complex.

It is found in the cytoplasm. Its function is as follows. The UvrABC repair system catalyzes the recognition and processing of DNA lesions. UvrC both incises the 5' and 3' sides of the lesion. The N-terminal half is responsible for the 3' incision and the C-terminal half is responsible for the 5' incision. In Treponema denticola (strain ATCC 35405 / DSM 14222 / CIP 103919 / JCM 8153 / KCTC 15104), this protein is UvrABC system protein C.